Reading from the N-terminus, the 503-residue chain is Maturase K (503 aa).

Belongs to the intron maturase 2 family. MatK subfamily.

It is found in the plastid. The protein localises to the chloroplast. Its function is as follows. Usually encoded in the trnK tRNA gene intron. Probably assists in splicing its own and other chloroplast group II introns. The polypeptide is Maturase K (Aethionema cordifolium (Lebanon stonecress)).